We begin with the raw amino-acid sequence, 506 residues long: Carboxyl-terminal PDZ ligand of neuronal nitric oxide synthase protein (506 aa).

Positions F26–G196 constitute a PID domain. 2 disordered regions span residues H175–P224 and D241–E260. 3 positions are modified to phosphoserine: S188, S192, and S195. Positions T203–A213 are enriched in low complexity. Residue S266 is modified to Phosphoserine. A coiled-coil region spans residues A322–L363. Phosphoserine occurs at positions 371, 374, 401, and 417. An interaction with NOS1 region spans residues Q494–V506. The PDZ-binding signature appears at I504–V506.

Interacts with the PDZ domain of NOS1 or the second PDZ domain of DLG4 through its C-terminus. Interacts with RASD1 and SYN1, SYN2 and SYN3 via its PID domain. Forms a ternary complex with NOS1 and RASD1. Forms a ternary complex with NOS1 and SYN1. In terms of tissue distribution, expressed in kidney glomeruli podocytes.

The protein localises to the cell projection. It is found in the filopodium. The protein resides in the podosome. Its function is as follows. Adapter protein involved in neuronal nitric-oxide (NO) synthesis regulation via its association with nNOS/NOS1. The complex formed with NOS1 and synapsins is necessary for specific NO and synapsin functions at a presynaptic level. Mediates an indirect interaction between NOS1 and RASD1 leading to enhance the ability of NOS1 to activate RASD1. Competes with DLG4 for interaction with NOS1, possibly affecting NOS1 activity by regulating the interaction between NOS1 and DLG4. In kidney podocytes, plays a role in podosomes and filopodia formation through CDC42 activation. This is Carboxyl-terminal PDZ ligand of neuronal nitric oxide synthase protein from Homo sapiens (Human).